We begin with the raw amino-acid sequence, 290 residues long: Carbonic anhydrase-related protein (290 aa).

At serine 5 the chain carries Phosphoserine. Residues 27-289 enclose the Alpha-carbonic anhydrase domain; sequence VEWGYEEGVE…LSDRVIRAAF (263 aa). The active-site Proton donor/acceptor is histidine 87. Zn(2+) contacts are provided by histidine 118 and histidine 141.

This sequence belongs to the alpha-carbonic anhydrase family.

In terms of biological role, does not have a carbonic anhydrase catalytic activity. This is Carbonic anhydrase-related protein (Ca8) from Rattus norvegicus (Rat).